The primary structure comprises 39 residues: Phospholipase A2 (39 aa).

Ca(2+)-binding residues include Trp10, Gly12, and Gly14. A disulfide bond links Cys11 and Cys33. Residue His36 is part of the active site. Asp37 provides a ligand contact to Ca(2+).

It depends on Ca(2+) as a cofactor. In terms of tissue distribution, expressed uniformly in tentacles (at protein level).

It localises to the secreted. The protein localises to the nematocyst. The enzyme catalyses a 1,2-diacyl-sn-glycero-3-phosphocholine + H2O = a 1-acyl-sn-glycero-3-phosphocholine + a fatty acid + H(+). Inhibited by morin and p-BPB. PA2 catalyzes the calcium-dependent hydrolysis of the 2-acyl groups in 3-sn-phosphoglycerides. Induces insulin secretion in isolated rat islets under high glucose concentration conditions, but not under low glucose concentration conditions. Increases perfusion pressure, renal vascular resistance, urinary flow, glomerular filtration rate, and potassium, sodium, and chloride excretion levels in rat kidney. Does not increase perfusion pressure in the rat mesenteric vascular bed. The sequence is that of Phospholipase A2 from Bunodosoma caissarum (Sea anemone).